The chain runs to 237 residues: Pyridoxal phosphate homeostasis protein (237 aa).

The residue at position 31 (K31) is an N6-(pyridoxal phosphate)lysine.

It belongs to the pyridoxal phosphate-binding protein YggS/PROSC family.

It localises to the cytoplasm. It is found in the nucleus. Functionally, pyridoxal 5'-phosphate (PLP)-binding protein, which may be involved in intracellular homeostatic regulation of pyridoxal 5'-phosphate (PLP), the active form of vitamin B6. The sequence is that of Pyridoxal phosphate homeostasis protein from Schizosaccharomyces pombe (strain 972 / ATCC 24843) (Fission yeast).